The following is a 584-amino-acid chain: Breast carcinoma-amplified sequence 1 (584 aa).

3 disordered regions span residues Met1–Ala29, Val59–Ile280, and Pro297–Phe377. 2 stretches are compositionally biased toward polar residues: residues Val59–Ile69 and Ala112–Ala128. Phosphoserine occurs at positions 124 and 192. 3 stretches are compositionally biased toward basic and acidic residues: residues Ser186–Glu226, Pro238–Gln252, and Ala300–Ala311. Ser314 bears the Phosphoserine mark. Residues Ser314 to Thr354 show a composition bias toward polar residues. Basic and acidic residues predominate over residues Pro357–Ser366. A phosphoserine mark is found at Ser381 and Ser399. The tract at residues Thr415–Lys584 is disordered. Residues Thr428–Pro439 show a composition bias toward basic and acidic residues. Thr480 is modified (phosphothreonine). Residues Lys494–Ala506 are compositionally biased toward basic and acidic residues. Polar residues predominate over residues Cys525–Asp540. Positions Lys541–Gln550 are enriched in basic and acidic residues. Ser552 carries the post-translational modification Phosphoserine. The segment at Met565–Lys584 is interacts with DYNLL1 and DYNLL2.

As to quaternary structure, homodimer. Interacts with DYNLL1 and DYNLL2. As to expression, highly expressed in the brain and, more specifically, in oligodendrocytes (at protein level). Expressed in the prostate, and at lower levels in testis, intestine and colon. Overexpressed in most breast cancer cell lines and down-regulated in some colorectal tumors.

It localises to the cytoplasm. Functionally, required for myelination. The chain is Breast carcinoma-amplified sequence 1 (BCAS1) from Homo sapiens (Human).